Here is a 474-residue protein sequence, read N- to C-terminus: tRNA-2-methylthio-N(6)-dimethylallyladenosine synthase (474 aa).

An MTTase N-terminal domain is found at 3-120 (KKLHIKTWGC…LPEMINHVQG (118 aa)). 6 residues coordinate [4Fe-4S] cluster: Cys-12, Cys-49, Cys-83, Cys-157, Cys-161, and Cys-164. The Radical SAM core domain occupies 143–375 (RAEGPTAFVS…QQRISQQAME (233 aa)). The region spanning 378 to 441 (RKMVGTVQRV…ASSLRGILLR (64 aa)) is the TRAM domain.

Belongs to the methylthiotransferase family. MiaB subfamily. Monomer. [4Fe-4S] cluster serves as cofactor.

Its subcellular location is the cytoplasm. The catalysed reaction is N(6)-dimethylallyladenosine(37) in tRNA + (sulfur carrier)-SH + AH2 + 2 S-adenosyl-L-methionine = 2-methylsulfanyl-N(6)-dimethylallyladenosine(37) in tRNA + (sulfur carrier)-H + 5'-deoxyadenosine + L-methionine + A + S-adenosyl-L-homocysteine + 2 H(+). Functionally, catalyzes the methylthiolation of N6-(dimethylallyl)adenosine (i(6)A), leading to the formation of 2-methylthio-N6-(dimethylallyl)adenosine (ms(2)i(6)A) at position 37 in tRNAs that read codons beginning with uridine. This Yersinia pestis bv. Antiqua (strain Antiqua) protein is tRNA-2-methylthio-N(6)-dimethylallyladenosine synthase.